The primary structure comprises 1125 residues: Angiopoietin-1 receptor (1125 aa).

The first 22 residues, methionine 1 to glycine 22, serve as a signal peptide directing secretion. Over alanine 23–leucine 748 the chain is Extracellular. The cysteines at positions 44 and 102 are disulfide-linked. Positions cysteine 44–serine 123 constitute an Ig-like C2-type 1 domain. N-linked (GlcNAc...) asparagine glycosylation is present at asparagine 158. 3 consecutive EGF-like domains span residues arginine 210–glutamate 252, alanine 254–asparagine 299, and alanine 301–glutamate 341. 13 cysteine pairs are disulfide-bonded: cysteine 211–cysteine 220, cysteine 224–cysteine 233, cysteine 227–cysteine 240, cysteine 242–cysteine 251, cysteine 255–cysteine 264, cysteine 268–cysteine 274, cysteine 280–cysteine 287, cysteine 289–cysteine 298, cysteine 302–cysteine 311, cysteine 315–cysteine 323, cysteine 317–cysteine 329, cysteine 331–cysteine 340, and cysteine 370–cysteine 424. The region spanning proline 350 to serine 440 is the Ig-like C2-type 2 domain. Fibronectin type-III domains lie at proline 447–isoleucine 541, proline 545–aspartate 637, and glutamine 642–glutamate 735. The chain crosses the membrane as a helical span at residues leucine 749 to isoleucine 769. Over methionine 770–alanine 1125 the chain is Cytoplasmic. In terms of domain architecture, Protein kinase spans isoleucine 825–leucine 1097. ATP contacts are provided by residues isoleucine 831 to valine 839 and lysine 856. Tyrosine 861 carries the phosphotyrosine; by autocatalysis modification. Aspartate 965 serves as the catalytic Proton acceptor. Residues tyrosine 993, tyrosine 1103, and tyrosine 1109 each carry the phosphotyrosine; by autocatalysis modification.

The protein belongs to the protein kinase superfamily. Tyr protein kinase family. Tie subfamily. As to quaternary structure, homodimer. Heterodimer with TIE1. Interacts with ANGPT1, ANGPT2 and ANGPT4. At cell-cell contacts in quiescent cells, forms a signaling complex composed of ANGPT1 plus TEK molecules from two adjoining cells. In the absence of endothelial cell-cell contacts, interaction with ANGPT1 mediates contacts with the extracellular matrix. Interacts (tyrosine phosphorylated) with TNIP2. Interacts (tyrosine phosphorylated) with SHC1 (via SH2 domain). Interacts with PTPRB; this promotes endothelial cell-cell adhesion. Interacts with DOK2, GRB2, GRB7, GRB14, PIK3R1 and PTPN11/SHP2. Colocalizes with DOK2 at contacts with the extracellular matrix in migrating cells. Proteolytic processing leads to the shedding of the extracellular domain (soluble TIE-2 alias sTIE-2). In terms of processing, autophosphorylated on tyrosine residues in response to ligand binding. Autophosphorylation occurs in trans, i.e. one subunit of the dimeric receptor phosphorylates tyrosine residues on the other subunit. Autophosphorylation occurs in a sequential manner, where Tyr-993 in the kinase activation loop is phosphorylated first, followed by autophosphorylation at Tyr-1109 and at additional tyrosine residues. ANGPT1-induced phosphorylation is impaired during hypoxia, due to increased expression of ANGPT2. Phosphorylation is important for interaction with GRB14, PIK3R1 and PTPN11. Phosphorylation at Tyr-1103 is important for interaction with GRB2 and GRB7. Phosphorylation at Tyr-1109 is important for interaction with DOK2 and for coupling to downstream signal transduction pathways in endothelial cells. Dephosphorylated by PTPRB. Post-translationally, ubiquitinated. The phosphorylated receptor is ubiquitinated and internalized, leading to its degradation. As to expression, specifically expressed in developing vascular endothelial cells.

The protein resides in the cell membrane. It localises to the cell junction. It is found in the focal adhesion. The protein localises to the cytoplasm. Its subcellular location is the cytoskeleton. The protein resides in the secreted. The enzyme catalyses L-tyrosyl-[protein] + ATP = O-phospho-L-tyrosyl-[protein] + ADP + H(+). With respect to regulation, angiopoietin binding leads to receptor dimerization and activation by autophosphorylation at Tyr-993 on the kinase activation loop. Functionally, tyrosine-protein kinase that acts as a cell-surface receptor for ANGPT1, ANGPT2 and ANGPT4 and regulates angiogenesis, endothelial cell survival, proliferation, migration, adhesion and cell spreading, reorganization of the actin cytoskeleton, but also maintenance of vascular quiescence. Has anti-inflammatory effects by preventing the leakage of pro-inflammatory plasma proteins and leukocytes from blood vessels. Required for normal angiogenesis and heart development during embryogenesis. Required for post-natal hematopoiesis. After birth, activates or inhibits angiogenesis, depending on the context. Inhibits angiogenesis and promotes vascular stability in quiescent vessels, where endothelial cells have tight contacts. In quiescent vessels, ANGPT1 oligomers recruit TEK to cell-cell contacts, forming complexes with TEK molecules from adjoining cells, and this leads to preferential activation of phosphatidylinositol 3-kinase and the AKT1 signaling cascades. In migrating endothelial cells that lack cell-cell adhesions, ANGT1 recruits TEK to contacts with the extracellular matrix, leading to the formation of focal adhesion complexes, activation of PTK2/FAK and of the downstream kinases MAPK1/ERK2 and MAPK3/ERK1, and ultimately to the stimulation of sprouting angiogenesis. ANGPT1 signaling triggers receptor dimerization and autophosphorylation at specific tyrosine residues that then serve as binding sites for scaffold proteins and effectors. Signaling is modulated by ANGPT2 that has lower affinity for TEK, can promote TEK autophosphorylation in the absence of ANGPT1, but inhibits ANGPT1-mediated signaling by competing for the same binding site. Signaling is also modulated by formation of heterodimers with TIE1, and by proteolytic processing that gives rise to a soluble TEK extracellular domain. The soluble extracellular domain modulates signaling by functioning as decoy receptor for angiopoietins. TEK phosphorylates DOK2, GRB7, GRB14, PIK3R1, SHC1 and TIE1. The sequence is that of Angiopoietin-1 receptor (TEK) from Bos taurus (Bovine).